The chain runs to 804 residues: Zinc finger protein 541 (804 aa).

2 disordered regions span residues 21–120 (SKAS…NPDI) and 133–197 (TLDL…GNPR). The segment at 285 to 307 (FICKNCSQMFYTEKGLSSHMCFH) adopts a C2H2-type 1 zinc-finger fold. Positions 379–426 (MEQEKDGEERDSKESSQQRKRKKRPPPKRLFIPPPPSTAGEPGPAGCH) are disordered. Positions 380 to 395 (EQEKDGEERDSKESSQ) are enriched in basic and acidic residues. The segment covering 396 to 405 (QRKRKKRPPP) has biased composition (basic residues). An ELM2 domain is found at 509–601 (PHINIGSRFQ…VALETLLLRG (93 aa)). The SANT domain occupies 616-667 (TGSDVWTPIEKRLFKKAFYAHKKDFYLIHKTIQTKTVAQCVEYYYIWKKMIK). A disordered region spans residues 680–743 (VKREPEEVER…TPEPSGSVES (64 aa)). Residues 690–721 (TEEKVPCSPRERPSHHPIPELKIKTKSYRRES) show a composition bias toward basic and acidic residues. The C2H2-type 2 zinc-finger motif lies at 747–769 (FPCRECERVFDKIKSRNAHMKRH).

Interacts with DNTTIP1. Identified in a complex with KCDT19, HDAC1 and HSPA2s. Component of a histone deacetylase complex containing DNTTIP1, ZNF541, HDAC1 and HDAC2. Identified in a complex with HDAC1, HDAC2, DNTTIP1 and KCTD19.

The protein localises to the nucleus. Functionally, transcription regulator which is essential for male fertility and for the completion of meiotic prophase in spermatocytes. Regulates progression of the pachytene stage of meiotic prophase by activating the expression of genes involved in meiosis and post-meiosis during spermatogenesis. Maintains the repression of pre-pachytene transcriptional programs, including meiotic double-strand breaks (DSB) formation genes in pachytene spermatocytes and suppresses aberrant DSB formation after mid-pachytene, thus ensuring meiosis progression. The chain is Zinc finger protein 541 (ZNF541) from Macaca fascicularis (Crab-eating macaque).